Here is a 1072-residue protein sequence, read N- to C-terminus: DNA-directed RNA polymerase subunit beta (1072 aa).

The protein belongs to the RNA polymerase beta chain family. In terms of assembly, in plastids the minimal PEP RNA polymerase catalytic core is composed of four subunits: alpha, beta, beta', and beta''. When a (nuclear-encoded) sigma factor is associated with the core the holoenzyme is formed, which can initiate transcription.

It is found in the plastid. The protein resides in the chloroplast. The enzyme catalyses RNA(n) + a ribonucleoside 5'-triphosphate = RNA(n+1) + diphosphate. Functionally, DNA-dependent RNA polymerase catalyzes the transcription of DNA into RNA using the four ribonucleoside triphosphates as substrates. The protein is DNA-directed RNA polymerase subunit beta of Nasturtium officinale (Watercress).